The following is a 322-amino-acid chain: Formimidoylglutamase (322 aa).

Mn(2+)-binding residues include histidine 130, aspartate 156, histidine 158, aspartate 160, cysteine 245, and aspartate 247.

It belongs to the arginase family. Mn(2+) is required as a cofactor.

It carries out the reaction N-formimidoyl-L-glutamate + H2O = formamide + L-glutamate. It participates in amino-acid degradation; L-histidine degradation into L-glutamate; L-glutamate from N-formimidoyl-L-glutamate (hydrolase route): step 1/1. Catalyzes the conversion of N-formimidoyl-L-glutamate to L-glutamate and formamide. The chain is Formimidoylglutamase from Lysinibacillus sphaericus (strain C3-41).